A 298-amino-acid polypeptide reads, in one-letter code: ATP synthase F(1) complex subunit gamma, mitochondrial (298 aa).

The N-terminal 25 residues, 1-25 (MFSRAGVAGLSAWTLQPQWIQVRNM), are a transit peptide targeting the mitochondrion. Position 39 is an N6-acetyllysine (K39). K49 carries the N6-succinyllysine modification. N6-acetyllysine is present on K55. N6-acetyllysine; alternate is present on K115. Position 115 is an N6-succinyllysine; alternate (K115). S146 bears the Phosphoserine mark. N6-acetyllysine; alternate is present on K154. Residue K154 is modified to N6-succinyllysine; alternate. K197 is subject to N6-acetyllysine. K270 bears the N6-succinyllysine mark.

It belongs to the ATPase gamma chain family. As to quaternary structure, component of the ATP synthase complex composed at least of ATP5F1A/subunit alpha, ATP5F1B/subunit beta, ATP5MC1/subunit c (homooctomer), MT-ATP6/subunit a, MT-ATP8/subunit 8, ATP5ME/subunit e, ATP5MF/subunit f, ATP5MG/subunit g, ATP5MK/subunit k, ATP5MJ/subunit j, ATP5F1C/subunit gamma, ATP5F1D/subunit delta, ATP5F1E/subunit epsilon, ATP5PF/subunit F6, ATP5PB/subunit b, ATP5PD/subunit d, ATP5PO/subunit OSCP. ATP synthase complex consists of a soluble F(1) head domain (subunits alpha(3) and beta(3)) - the catalytic core - and a membrane F(0) domain - the membrane proton channel (subunits c, a, 8, e, f, g, k and j). These two domains are linked by a central stalk (subunits gamma, delta, and epsilon) rotating inside the F1 region and a stationary peripheral stalk (subunits F6, b, d, and OSCP). Interacts with FLVCR2; this interaction occurs in the absence of heme and is disrupted upon heme binding.

The protein localises to the mitochondrion inner membrane. Subunit gamma, of the mitochondrial membrane ATP synthase complex (F(1)F(0) ATP synthase or Complex V) that produces ATP from ADP in the presence of a proton gradient across the membrane which is generated by electron transport complexes of the respiratory chain. ATP synthase complex consist of a soluble F(1) head domain - the catalytic core - and a membrane F(1) domain - the membrane proton channel. These two domains are linked by a central stalk rotating inside the F(1) region and a stationary peripheral stalk. During catalysis, ATP synthesis in the catalytic domain of F(1) is coupled via a rotary mechanism of the central stalk subunits to proton translocation. In vivo, can only synthesize ATP although its ATP hydrolase activity can be activated artificially in vitro. With the central stalk subunit delta, is essential for the biogenesis of F(1) catalytic part of the ATP synthase complex namely in the formation of F1 assembly intermediate. The chain is ATP synthase F(1) complex subunit gamma, mitochondrial from Macaca fascicularis (Crab-eating macaque).